A 521-amino-acid chain; its full sequence is uncharacterized protein (521 aa).

The next 10 helical transmembrane spans lie at 103–123 (NLML…VPMP), 136–156 (FWFF…LWIT), 177–197 (YILF…FTAW), 200–220 (ITFT…GISF), 259–279 (AYAH…VYIV), 299–319 (IMYV…SSWI), 327–346 (YALV…VYVR), 358–378 (FVLV…LITM), 411–431 (CVAS…LHFG), and 450–470 (FKLT…ASYL).

The protein localises to the membrane. This is an uncharacterized protein from Schizosaccharomyces pombe (strain 972 / ATCC 24843) (Fission yeast).